Here is a 617-residue protein sequence, read N- to C-terminus: 5-hydroxytryptamine receptor 2B (617 aa).

The Extracellular portion of the chain corresponds to 1 to 95 (MLKTVTTAMA…LLVKMIAMAV (95 aa)). N-linked (GlcNAc...) asparagine glycans are attached at residues Asn31, Asn41, Asn51, and Asn58. A helical membrane pass occupies residues 96 to 116 (VLGLMILVTIIGNVFVIAAII). Residues 117-128 (LERNLQNVANYL) are Cytoplasmic-facing. Residues 129 to 149 (VASLAVADLFVACLVMPLGAV) form a helical membrane-spanning segment. Topologically, residues 150–164 (YEISNGWILGPELCD) are extracellular. A disulfide bridge links Cys163 with Cys242. Residues 165 to 185 (IWTSCDVLCCTASILHLVAIA) traverse the membrane as a helical segment. Over 186-205 (ADRYWTVTNIDYNNLRTPRR) the chain is Cytoplasmic. Residues 206–226 (VFLMIFCVWFAALIVSLAPQF) form a helical membrane-spanning segment. Over 227-256 (GWKDPDYMKRIEEQHCMVSQDVGYQIFATC) the chain is Extracellular. The helical transmembrane segment at 257–277 (CTFYVPLLVILFLYWKIYIIA) threads the bilayer. The Cytoplasmic segment spans residues 278–534 (RKRIQRRAQK…EAKRERKAAQ (257 aa)). Positions 309 to 336 (RSKRRAERKRLEAGERTPVDGDGTGGQL) are disordered. Basic and acidic residues predominate over residues 317-327 (KRLEAGERTPV). A helical membrane pass occupies residues 535–555 (TLAIITGAFVICWLPFFVMAL). At 556–570 (TMSLCKECEIHTAVA) the chain is on the extracellular side. Residues 571–591 (SLFLWLGYFNSTLNPVIYTIF) traverse the membrane as a helical segment. At 592–617 (NPEFRRAFKRILFGRKAAARARSAKI) the chain is on the cytoplasmic side.

This sequence belongs to the G-protein coupled receptor 1 family.

Its subcellular location is the cell membrane. In terms of biological role, this is one of the several different receptors for 5-hydroxytryptamine (serotonin), a biogenic hormone that functions as a neurotransmitter, a hormone, and a mitogen. The activity of this receptor is mediated by G proteins which inhibit adenylate cyclase. The protein is 5-hydroxytryptamine receptor 2B (5-HT1B) of Drosophila melanogaster (Fruit fly).